A 377-amino-acid chain; its full sequence is Transcription factor ast-1 (377 aa).

A disordered region spans residues Pro72 to Ser143. Composition is skewed to low complexity over residues Ser96 to Lys109 and Thr118 to Glu142. The segment at residues Thr214–Asp294 is a DNA-binding region (ETS).

The protein belongs to the ETS family. In terms of tissue distribution, expressed in the A-neurons in the male-specific genital sensilla (simple sense organs) known as rays.

It localises to the nucleus. It is found in the cell projection. Its subcellular location is the neuron projection. Its function is as follows. Transcription factor. Probably binds to DNA sequences containing the consensus motif 5'-CGGA[AT][AG]-3'. Positively modulates expression of dopamine pathway genes, acting as a terminal selector for differentiation of dopaminergic neurons; may act in concert with homeobox proteins ceh-40, ceh-43 and ceh-20. Required for axon navigation in some interneurons, perhaps acting in the same pathways as basement membrane protein nid-1 and unc-6/netrin. Plays a role in the differentiation of the ventral cord pioneer neuron AVG. Required for morphogenesis of the pharynx. The protein is Transcription factor ast-1 of Caenorhabditis elegans.